The sequence spans 139 residues: Low molecular weight protein-tyrosine-phosphatase PtpB (139 aa).

Cys7 functions as the Nucleophile in the catalytic mechanism. Arg13 is a catalytic residue. Asp111 functions as the Proton donor in the catalytic mechanism.

It belongs to the low molecular weight phosphotyrosine protein phosphatase family.

It carries out the reaction O-phospho-L-tyrosyl-[protein] + H2O = L-tyrosyl-[protein] + phosphate. Its activity is regulated as follows. Inhibited by N-ethylmaleimide and sodium orthovanadate. Its function is as follows. Dephosphorylates the phosphotyrosine-containing proteins. The protein is Low molecular weight protein-tyrosine-phosphatase PtpB (ptpB) of Staphylococcus aureus.